Here is a 270-residue protein sequence, read N- to C-terminus: MLLGSVPQLDRVAIQLGPFPVYWYGIIIGTGVLLGLWLATREGERLGIPKDTFVDLVLIAVPIAILFARMYYVIFEWEYYAQNPSQIINIRQGGLAIHGGLIGAVITGILFAKRRGVSFWKLADIAAPSILLGQAIGRWGNFMNQEAHGDEVTRQFLEGLHLPDFIINQMYIDGVYYHPTFLYESLWNFAGVILLLALRKVNLRRGELFFTYLIWYSVGRFFVEGLRTDSLMLGPLRIAQVMSIGLVVISIIFIIVRRKMGQADKRYLEN.

The next 4 membrane-spanning stretches (helical) occupy residues Phe-19 to Ala-39, Leu-56 to Glu-76, Gln-92 to Ala-112, and Gly-116 to Ile-136. Arg-138 is a binding site for a 1,2-diacyl-sn-glycero-3-phospho-(1'-sn-glycerol). 3 helical membrane-spanning segments follow: residues His-178 to Leu-198, Gly-206 to Leu-226, and Leu-236 to Val-256.

The protein belongs to the Lgt family.

It is found in the cell membrane. The catalysed reaction is L-cysteinyl-[prolipoprotein] + a 1,2-diacyl-sn-glycero-3-phospho-(1'-sn-glycerol) = an S-1,2-diacyl-sn-glyceryl-L-cysteinyl-[prolipoprotein] + sn-glycerol 1-phosphate + H(+). The protein operates within protein modification; lipoprotein biosynthesis (diacylglyceryl transfer). Catalyzes the transfer of the diacylglyceryl group from phosphatidylglycerol to the sulfhydryl group of the N-terminal cysteine of a prolipoprotein, the first step in the formation of mature lipoproteins. This Bacillus cereus (strain Q1) protein is Phosphatidylglycerol--prolipoprotein diacylglyceryl transferase.